Here is a 328-residue protein sequence, read N- to C-terminus: Glutathionyl-hydroquinone reductase YqjG (328 aa).

Cys63 functions as the Nucleophile in the catalytic mechanism. Glutathione contacts are provided by residues Trp96, 130-133 (RVTV), and 148-149 (ES). Positions 172–296 (PPALQTKIDE…VNFDHIRNHY (125 aa)) constitute a GST C-terminal domain. The Proton donor/acceptor role is filled by Tyr195. Residues 203–311 (QEAYDEAVAK…TINPTGIISI (109 aa)) are dimerization.

This sequence belongs to the GST superfamily. Xi-class GSH transferase family. As to quaternary structure, homodimer.

It carries out the reaction 2-(glutathione-S-yl)-hydroquinone + glutathione = hydroquinone + glutathione disulfide. Functionally, catalyzes glutathione (GSH)-dependent reduction of glutathionyl-hydroquinones (GS-HQs) to the corresponding hydroquinones. Can use a variety of GS-HQs as substrates, such as GS-p-hydroquinone (GS-HQ), GS-hydroxy-p-hydroquinone (GS-HHQ), GS-methyl-p-hydroquinone (GS-MHQ), GS-menadiol, and GS-trichloro-p-hydroquinone (GS-TriCH). Also displays GSH-dependent disulfide-bond reduction activity toward HED (2-hydroxyethyl disulfide), and is able to catalyze DMA (dimethylarsinate) reduction. Exhibits no GSH transferase activity with 1-chloro-2,4-dinitrobenzene (CDNB). This chain is Glutathionyl-hydroquinone reductase YqjG (yqjG), found in Escherichia coli (strain K12).